Reading from the N-terminus, the 184-residue chain is UPF0669 protein C6orf120 homolog (184 aa).

The signal sequence occupies residues 1–23 (MAAPWTGALLLLLASQAVSSAQA). N-linked (GlcNAc...) asparagine glycosylation is present at asparagine 47.

This sequence belongs to the UPF0669 family.

It is found in the secreted. Its function is as follows. May be involved in induction of apoptosis in CD4(+) T-cells, but not CD8(+) T-cells or hepatocytes. This is UPF0669 protein C6orf120 homolog from Bos taurus (Bovine).